We begin with the raw amino-acid sequence, 1165 residues long: DNA-directed RNA polymerase subunit beta' (1165 aa).

The Zn(2+) site is built by Cys60, Cys62, Cys75, and Cys78. Residues Asp449, Asp451, and Asp453 each coordinate Mg(2+). Zn(2+)-binding residues include Cys794, Cys868, Cys875, and Cys878.

This sequence belongs to the RNA polymerase beta' chain family. In terms of assembly, the RNAP catalytic core consists of 2 alpha, 1 beta, 1 beta' and 1 omega subunit. When a sigma factor is associated with the core the holoenzyme is formed, which can initiate transcription. The cofactor is Mg(2+). Zn(2+) is required as a cofactor.

It carries out the reaction RNA(n) + a ribonucleoside 5'-triphosphate = RNA(n+1) + diphosphate. Functionally, DNA-dependent RNA polymerase catalyzes the transcription of DNA into RNA using the four ribonucleoside triphosphates as substrates. The chain is DNA-directed RNA polymerase subunit beta' from Acetivibrio thermocellus (strain ATCC 27405 / DSM 1237 / JCM 9322 / NBRC 103400 / NCIMB 10682 / NRRL B-4536 / VPI 7372) (Clostridium thermocellum).